A 539-amino-acid polypeptide reads, in one-letter code: Lysosomal cobalamin transport escort protein LMBD1 (539 aa).

At 1 to 7 the chain is on the extracellular side; it reads MAAAASE. Residues 8–28 form a helical membrane-spanning segment; the sequence is LLTGWFLFGLALLAILIFSWV. Residues 29-47 lie on the Cytoplasmic side of the membrane; that stretch reads YVRKYQSRRESEVISTVTA. Residues 48–68 form a helical membrane-spanning segment; sequence IFALAVALISSALLPVDIFLV. Topologically, residues 69–97 are extracellular; that stretch reads SYMKNQNGTFKDWADANVSRQIEDTVLYG. Residues Asn-75 and Asn-85 are each glycosylated (N-linked (GlcNAc...) asparagine). Residues 98–118 traverse the membrane as a helical segment; that stretch reads YYTLYSIILFCVFLWIPFVYF. The Cytoplasmic portion of the chain corresponds to 119-141; sequence YYEEKEEDDGNTCSQVKTALKYT. A helical membrane pass occupies residues 142–162; it reads LGFITVCAVLLLIGAFVPLDI. The Extracellular segment spans residues 163-185; sequence PNKKNSTEWEKVKLLFEEFGSSH. An N-linked (GlcNAc...) asparagine glycan is attached at Asn-167. The helical transmembrane segment at 186–206 threads the bilayer; that stretch reads GLTALSFSISSLTVIGMLAAI. Over 207 to 302 the chain is Cytoplasmic; the sequence is TYTAYGMSAL…KFCEAIRPLK (96 aa). A helical transmembrane segment spans residues 303–323; that stretch reads IVWGVFFIIVALLFTVSLFLS. The Extracellular segment spans residues 324–361; sequence NLDKALHSAGFDSGFIILGTNLTNPLNMLLPVLQTVFP. Asn-344 carries an N-linked (GlcNAc...) asparagine glycan. The helical transmembrane segment at 362-382 threads the bilayer; sequence LDYILITTIVMYFIFTSMAGI. Over 383-405 the chain is Cytoplasmic; sequence RNMGIWFFWIRLYKIRRGKTRPQ. Residues 406-426 form a helical membrane-spanning segment; it reads ALLFLCMILLLIVLHTSYMIY. The Extracellular portion of the chain corresponds to 427–483; that stretch reads SLAPQYVMYGSQKYLVQSNKTIDGQPKNVTTFVAKDCDADAPEDQCIVTRTYLFLHK. 2 N-linked (GlcNAc...) asparagine glycosylation sites follow: Asn-445 and Asn-454. Residues 484 to 504 traverse the membrane as a helical segment; sequence FWFFSAVYYFGNWAFIAVFLI. Residues 505-539 lie on the Cytoplasmic side of the membrane; it reads GLIVSCCKGKKSVIEGEVDEDDSDMSDDELSAYYC.

Belongs to the LIMR family. LMBRD1 subfamily.

Its subcellular location is the endoplasmic reticulum membrane. It localises to the lysosome membrane. It is found in the cell membrane. Lysosomal membrane chaperone required to export cobalamin (vitamin B12) from the lysosome to the cytosol, allowing its conversion to cofactors. Targets ABCD4 transporter from the endoplasmic reticulum to the lysosome. Then forms a complex with lysosomal ABCD4 and cytoplasmic MMACHC to transport cobalamin across the lysosomal membrane. May play a role in mediating and regulating the internalization of the insulin receptor. The protein is Lysosomal cobalamin transport escort protein LMBD1 (LMBRD1) of Gallus gallus (Chicken).